The following is a 529-amino-acid chain: Arginine--tRNA ligase (529 aa).

The 'HIGH' region signature appears at 113 to 123 (ANPTGPLHIGH).

The protein belongs to the class-I aminoacyl-tRNA synthetase family. In terms of assembly, monomer.

Its subcellular location is the cytoplasm. The enzyme catalyses tRNA(Arg) + L-arginine + ATP = L-arginyl-tRNA(Arg) + AMP + diphosphate. This is Arginine--tRNA ligase from Campylobacter curvus (strain 525.92).